The chain runs to 400 residues: Lysophospholipid transporter LplT (400 aa).

The next 12 helical transmembrane spans lie at 19–39, 53–73, 91–111, 139–159, 164–184, 195–213, 227–247, 257–277, 281–301, 304–324, 352–372, and 373–393; these read VIVA…ATLA, VLQM…GQIA, AGAA…LVGI, LMEA…GVLA, IAAL…NLFI, SWRL…VVLW, LFWG…PVAL, YLNA…AKLV, TVSR…IFSL, ALLP…FFVV, NSAM…GVPA, and VAIG…LWIW.

Belongs to the major facilitator superfamily. LplT (TC 2.A.1.42) family.

It localises to the cell inner membrane. Catalyzes the facilitated diffusion of 2-acyl-glycero-3-phosphoethanolamine (2-acyl-GPE) into the cell. The protein is Lysophospholipid transporter LplT of Salmonella heidelberg (strain SL476).